The chain runs to 508 residues: Monocarboxylate transporter 9 (508 aa).

Topologically, residues 1–12 (MEFQKSPDGGWG) are cytoplasmic. Transmembrane regions (helical) follow at residues 13 to 33 (WVIV…PLAV), 53 to 73 (WVGS…SLFV), 80 to 100 (PVTI…SLAP), 102 to 122 (IYFL…LLYT), 137 to 157 (GLAL…YAAL), 164 to 184 (FYGL…ILAC), 303 to 323 (VFSA…PPSL), 341 to 361 (MPLI…LGIL), 370 to 390 (LYLY…IPFA), 396 to 416 (LAIL…FPYV), 431 to 451 (GILM…VGWF), and 460 to 480 (IAFY…LLAI). Residues 481–508 (LPCWDMCNKKLPKPAVPTTFFYKVASNV) are Cytoplasmic-facing.

Belongs to the major facilitator superfamily. Monocarboxylate porter (TC 2.A.1.13) family.

It localises to the cell membrane. It catalyses the reaction creatine(in) = creatine(out). The enzyme catalyses (R)-carnitine(in) = (R)-carnitine(out). Functionally, extracellular pH-and Na(+)-sensitive low-affinity creatine transporter. Also functions as a pH-independent carnitine efflux transporter. This is Monocarboxylate transporter 9 (Slc16a9) from Mus musculus (Mouse).